A 79-amino-acid polypeptide reads, in one-letter code: Acyl carrier protein (79 aa).

The Carrier domain maps to A4 to K79. S39 is modified (O-(pantetheine 4'-phosphoryl)serine).

The protein belongs to the acyl carrier protein (ACP) family. Post-translationally, 4'-phosphopantetheine is transferred from CoA to a specific serine of apo-ACP by AcpS. This modification is essential for activity because fatty acids are bound in thioester linkage to the sulfhydryl of the prosthetic group.

The protein resides in the cytoplasm. It functions in the pathway lipid metabolism; fatty acid biosynthesis. Its function is as follows. Carrier of the growing fatty acid chain in fatty acid biosynthesis. The sequence is that of Acyl carrier protein from Chlorobaculum parvum (strain DSM 263 / NCIMB 8327) (Chlorobium vibrioforme subsp. thiosulfatophilum).